Here is a 298-residue protein sequence, read N- to C-terminus: Protease HtpX homolog (298 aa).

The next 2 membrane-spanning stretches (helical) occupy residues 15 to 35 and 39 to 59; these read LIMV…GYLF and PWMG…IMWQ. His-143 lines the Zn(2+) pocket. Residue Glu-144 is part of the active site. His-147 is a Zn(2+) binding site. Helical transmembrane passes span 153-173 and 197-217; these read ILLS…SGMA and MIFK…SASL. Glu-227 contributes to the Zn(2+) binding site.

This sequence belongs to the peptidase M48B family. Zn(2+) serves as cofactor.

The protein localises to the cell membrane. In Lactobacillus helveticus (strain DPC 4571), this protein is Protease HtpX homolog.